We begin with the raw amino-acid sequence, 111 residues long: Nucleoid-associated protein CYB_2894 (111 aa).

It belongs to the YbaB/EbfC family. As to quaternary structure, homodimer.

The protein resides in the cytoplasm. It is found in the nucleoid. Binds to DNA and alters its conformation. May be involved in regulation of gene expression, nucleoid organization and DNA protection. This Synechococcus sp. (strain JA-2-3B'a(2-13)) (Cyanobacteria bacterium Yellowstone B-Prime) protein is Nucleoid-associated protein CYB_2894.